Consider the following 536-residue polypeptide: Phosphoenolpyruvate carboxykinase (ATP) (536 aa).

The substrate site is built by R61, Y195, and K201. ATP is bound by residues K201, H220, and 236-244 (GLSGTGKTT). Positions 201 and 220 each coordinate Mn(2+). Position 257 (D257) interacts with Mn(2+). ATP contacts are provided by E285, R322, and T447. Position 322 (R322) interacts with substrate.

The protein belongs to the phosphoenolpyruvate carboxykinase (ATP) family. The cofactor is Mn(2+).

The protein localises to the cytoplasm. The enzyme catalyses oxaloacetate + ATP = phosphoenolpyruvate + ADP + CO2. It functions in the pathway carbohydrate biosynthesis; gluconeogenesis. Functionally, involved in the gluconeogenesis. Catalyzes the conversion of oxaloacetate (OAA) to phosphoenolpyruvate (PEP) through direct phosphoryl transfer between the nucleoside triphosphate and OAA. This chain is Phosphoenolpyruvate carboxykinase (ATP), found in Allorhizobium ampelinum (strain ATCC BAA-846 / DSM 112012 / S4) (Agrobacterium vitis (strain S4)).